Here is a 249-residue protein sequence, read N- to C-terminus: Aspartate/glutamate leucyltransferase (249 aa).

It belongs to the R-transferase family. Bpt subfamily.

Its subcellular location is the cytoplasm. The enzyme catalyses N-terminal L-glutamyl-[protein] + L-leucyl-tRNA(Leu) = N-terminal L-leucyl-L-glutamyl-[protein] + tRNA(Leu) + H(+). The catalysed reaction is N-terminal L-aspartyl-[protein] + L-leucyl-tRNA(Leu) = N-terminal L-leucyl-L-aspartyl-[protein] + tRNA(Leu) + H(+). In terms of biological role, functions in the N-end rule pathway of protein degradation where it conjugates Leu from its aminoacyl-tRNA to the N-termini of proteins containing an N-terminal aspartate or glutamate. The chain is Aspartate/glutamate leucyltransferase from Azorhizobium caulinodans (strain ATCC 43989 / DSM 5975 / JCM 20966 / LMG 6465 / NBRC 14845 / NCIMB 13405 / ORS 571).